A 389-amino-acid polypeptide reads, in one-letter code: G2/M cell-cycle inhibitor DR6 (389 aa).

Belongs to the Roseolovirus DR6 family.

It localises to the host nucleus. In terms of biological role, inhibits the host G2/M cell-cycle progression in a p53-independent manner. The protein is G2/M cell-cycle inhibitor DR6 (DR6L) of Homo sapiens (Human).